Here is a 392-residue protein sequence, read N- to C-terminus: GTPase Obg (392 aa).

Residues 1 to 159 (MKFVDEATIL…RDLQLELMLL (159 aa)) enclose the Obg domain. The segment at 127–148 (NSRFKSSVNRSPRQKTMGTPGD) is disordered. A compositionally biased stretch (polar residues) spans 129–143 (RFKSSVNRSPRQKTM). An OBG-type G domain is found at 160–333 (ADVGMLGMPN…LCWDVMAFII (174 aa)). Residues 166–173 (GMPNAGKS), 191–195 (FTTLV), 213–216 (DIPG), 283–286 (NKID), and 314–316 (SAA) contribute to the GTP site. Residues Ser-173 and Thr-193 each contribute to the Mg(2+) site. Positions 363–386 (EQEVEVEDDEEWDEDWDEDDEEGV) are enriched in acidic residues. The tract at residues 363-392 (EQEVEVEDDEEWDEDWDEDDEEGVEFIYKR) is disordered.

Belongs to the TRAFAC class OBG-HflX-like GTPase superfamily. OBG GTPase family. As to quaternary structure, monomer. It depends on Mg(2+) as a cofactor.

The protein localises to the cytoplasm. Its function is as follows. An essential GTPase which binds GTP, GDP and possibly (p)ppGpp with moderate affinity, with high nucleotide exchange rates and a fairly low GTP hydrolysis rate. Plays a role in control of the cell cycle, stress response, ribosome biogenesis and in those bacteria that undergo differentiation, in morphogenesis control. This Enterobacter sp. (strain 638) protein is GTPase Obg.